The primary structure comprises 759 residues: DNA topoisomerase 4 subunit A (759 aa).

The Topo IIA-type catalytic domain occupies 44–516 (LPDVRDGLKP…VFGEAPQVDA (473 aa)). Residue Tyr-132 is the O-(5'-phospho-DNA)-tyrosine intermediate of the active site.

Belongs to the type II topoisomerase GyrA/ParC subunit family. ParC type 1 subfamily. Heterotetramer composed of ParC and ParE.

The protein localises to the cell membrane. The enzyme catalyses ATP-dependent breakage, passage and rejoining of double-stranded DNA.. In terms of biological role, topoisomerase IV is essential for chromosome segregation. It relaxes supercoiled DNA. Performs the decatenation events required during the replication of a circular DNA molecule. The sequence is that of DNA topoisomerase 4 subunit A from Caulobacter vibrioides (strain ATCC 19089 / CIP 103742 / CB 15) (Caulobacter crescentus).